We begin with the raw amino-acid sequence, 838 residues long: 1,4-alpha-glucan branching enzyme GlgB 1 (838 aa).

The segment covering 1–11 (MIPRPPSDDRA) has biased composition (basic and acidic residues). Disordered regions lie at residues 1–98 (MIPR…VSKK) and 116–142 (PVSP…SVLG). Low complexity predominate over residues 29-57 (KKAAAAKKTAGKKATPAAKATAAKGAVTK). The active-site Nucleophile is D513. Catalysis depends on E566, which acts as the Proton donor. The segment at 793–822 (TDGARYGGSDVTNPHPVKPEPQGRHGRPAS) is disordered.

This sequence belongs to the glycosyl hydrolase 13 family. GlgB subfamily. In terms of assembly, monomer.

The catalysed reaction is Transfers a segment of a (1-&gt;4)-alpha-D-glucan chain to a primary hydroxy group in a similar glucan chain.. It participates in glycan biosynthesis; glycogen biosynthesis. Catalyzes the formation of the alpha-1,6-glucosidic linkages in glycogen by scission of a 1,4-alpha-linked oligosaccharide from growing alpha-1,4-glucan chains and the subsequent attachment of the oligosaccharide to the alpha-1,6 position. The sequence is that of 1,4-alpha-glucan branching enzyme GlgB 1 from Streptomyces avermitilis (strain ATCC 31267 / DSM 46492 / JCM 5070 / NBRC 14893 / NCIMB 12804 / NRRL 8165 / MA-4680).